We begin with the raw amino-acid sequence, 146 residues long: Large ribosomal subunit protein uL15 (146 aa).

The segment covering 1-13 (MKLHELKPSEGSR) has biased composition (basic and acidic residues). Residues 1–54 (MKLHELKPSEGSRKVRNRVGRGIGSGNGKTAGKGHKGQNARSGGGVRPGFEGGQ) are disordered. Composition is skewed to gly residues over residues 21–31 (RGIGSGNGKTA) and 42–52 (SGGGVRPGFEG).

Belongs to the universal ribosomal protein uL15 family. Part of the 50S ribosomal subunit.

Binds to the 23S rRNA. This chain is Large ribosomal subunit protein uL15, found in Bacillus velezensis (strain DSM 23117 / BGSC 10A6 / LMG 26770 / FZB42) (Bacillus amyloliquefaciens subsp. plantarum).